The sequence spans 468 residues: BTB/POZ domain-containing protein 17 (468 aa).

The signal sequence occupies residues Met1–Ala16. The BTB domain maps to Thr51–Leu120. The 101-residue stretch at Val159 to Gln259 folds into the BACK domain.

It is found in the secreted. This is BTB/POZ domain-containing protein 17 (btbd17) from Xenopus tropicalis (Western clawed frog).